Consider the following 213-residue polypeptide: MSHSKSSQRWLKEHFSDPFVKKAQAEGMRSRAAYKLEEILKRDRILRPNMVVIDLGAAPGGWSQQIRKQMGDSGRVIALDIVKMAPLVGIEFLQGDFRDKAVLSQLEIMLKGQPVDLVLSDMAPNKSGIDVMDQPRMMYLAELAMDFADIHVKPGGSFLIKLFHGVGSDGYIRQLRHRYKKVAIRKPLASRKRSPEVYILGDGKLTQNEVSCS.

Residues Gly60, Trp62, Asp80, Asp96, and Asp121 each contribute to the S-adenosyl-L-methionine site. The active-site Proton acceptor is Lys161.

This sequence belongs to the class I-like SAM-binding methyltransferase superfamily. RNA methyltransferase RlmE family.

Its subcellular location is the cytoplasm. It catalyses the reaction uridine(2552) in 23S rRNA + S-adenosyl-L-methionine = 2'-O-methyluridine(2552) in 23S rRNA + S-adenosyl-L-homocysteine + H(+). Functionally, specifically methylates the uridine in position 2552 of 23S rRNA at the 2'-O position of the ribose in the fully assembled 50S ribosomal subunit. The polypeptide is Ribosomal RNA large subunit methyltransferase E (Xylella fastidiosa (strain M23)).